Consider the following 80-residue polypeptide: UPF0291 protein LCA_1274 (80 aa).

Residues 59-80 (EGKEVTPEKVKDIQREKGLRDD) form a disordered region.

The protein belongs to the UPF0291 family.

The protein localises to the cytoplasm. The protein is UPF0291 protein LCA_1274 of Latilactobacillus sakei subsp. sakei (strain 23K) (Lactobacillus sakei subsp. sakei).